A 338-amino-acid polypeptide reads, in one-letter code: Anthranilate phosphoribosyltransferase (338 aa).

5-phospho-alpha-D-ribose 1-diphosphate is bound by residues Gly-81, Gly-84 to Asp-85, Thr-89, Asn-91 to Thr-94, Lys-109 to Ser-117, and Ala-121. Gly-81 is a binding site for anthranilate. A Mg(2+)-binding site is contributed by Ser-93. Asn-112 contributes to the anthranilate binding site. Residue Arg-167 coordinates anthranilate. Mg(2+) contacts are provided by Asp-225 and Glu-226.

Belongs to the anthranilate phosphoribosyltransferase family. Homodimer. Mg(2+) is required as a cofactor.

It carries out the reaction N-(5-phospho-beta-D-ribosyl)anthranilate + diphosphate = 5-phospho-alpha-D-ribose 1-diphosphate + anthranilate. The protein operates within amino-acid biosynthesis; L-tryptophan biosynthesis; L-tryptophan from chorismate: step 2/5. In terms of biological role, catalyzes the transfer of the phosphoribosyl group of 5-phosphorylribose-1-pyrophosphate (PRPP) to anthranilate to yield N-(5'-phosphoribosyl)-anthranilate (PRA). This chain is Anthranilate phosphoribosyltransferase, found in Rhizobium etli (strain CIAT 652).